Consider the following 233-residue polypeptide: Small ribosomal subunit protein uS3 (233 aa).

One can recognise a KH type-2 domain in the interval 39-107; sequence IRAFLKRKLY…DVNINIKEER (69 aa). Positions 212–222 are enriched in basic and acidic residues; the sequence is MQPEKTEESAP. A disordered region spans residues 212 to 233; sequence MQPEKTEESAPAKKSRRTRRGK. Residues 224-233 are compositionally biased toward basic residues; that stretch reads KKSRRTRRGK.

This sequence belongs to the universal ribosomal protein uS3 family. As to quaternary structure, part of the 30S ribosomal subunit. Forms a tight complex with proteins S10 and S14.

Its function is as follows. Binds the lower part of the 30S subunit head. Binds mRNA in the 70S ribosome, positioning it for translation. This chain is Small ribosomal subunit protein uS3, found in Campylobacter jejuni subsp. doylei (strain ATCC BAA-1458 / RM4099 / 269.97).